We begin with the raw amino-acid sequence, 171 residues long: Co-chaperone protein HscB (171 aa).

In terms of domain architecture, J spans 2 to 74 (DYFTLFGLPA…LTRAEYLLSL (73 aa)).

This sequence belongs to the HscB family. Interacts with HscA and stimulates its ATPase activity. Interacts with IscU.

Functionally, co-chaperone involved in the maturation of iron-sulfur cluster-containing proteins. Seems to help targeting proteins to be folded toward HscA. This is Co-chaperone protein HscB from Salmonella choleraesuis (strain SC-B67).